Consider the following 1275-residue polypeptide: Membrane-associated guanylate kinase, WW and PDZ domain-containing protein 2 (1275 aa).

A PDZ 1 domain is found at 17-101 (ESVIGRNPEG…PLRLKCVKQG (85 aa)). The Guanylate kinase-like domain occupies 109-283 (RHYLNLRFQK…PVYSQPEELK (175 aa)). The disordered stretch occupies residues 203–305 (LPGATPSAEG…ENEDSDPLPD (103 aa)). Positions 280–295 (EELKDQMDDTKPTKPE) are enriched in basic and acidic residues. 2 WW domains span residues 301–334 (DPLP…DPRL) and 347–380 (NELP…NPVL). Positions 301-380 (DPLPDNWEMA…RRTQFENPVL (80 aa)) are interaction with DDN. Y361 is modified (phosphotyrosine). PDZ domains follow at residues 425–509 (STTL…CRGY) and 604–682 (TLTI…HRGG). Position 685 is a phosphoserine (S685). The disordered stretch occupies residues 698–740 (ENQGSPQTSLSAPAVPQNLPFPPALHRSSFPDSTEAFDPRKPD). Positions 699-708 (NQGSPQTSLS) are enriched in polar residues. In terms of domain architecture, PDZ 4 spans 777–859 (DVHLRRMESG…NGQVNLTVRR (83 aa)). At Y826 the chain carries Phosphotyrosine. Residues 868–912 (CPENGRSPGSVSTHHSSPRSDYATYSNSNHAAPSSNASPPEGFAS) form a disordered region. S883 and S884 each carry phosphoserine. Over residues 893–907 (SNSNHAAPSSNASPP) the composition is skewed to low complexity. In terms of domain architecture, PDZ 5 spans 919 to 1009 (DVVIHRKENE…SVTLRIIPQE (91 aa)). The segment covering 1010–1040 (ELNSPTSAPSSEKQSPMAQQHSPLAQQSPLA) has biased composition (polar residues). The interval 1010 to 1128 (ELNSPTSAPS…PDTRQYPLSD (119 aa)) is disordered. S1013 carries the post-translational modification Phosphoserine. Over residues 1067-1083 (NSYRSEVKARQDVKPDI) the composition is skewed to basic and acidic residues. The PDZ 6 domain occupies 1139-1221 (TVDMEKGAKG…RVRLLLKRGT (83 aa)).

It belongs to the MAGUK family. As to quaternary structure, interacts (via its WW domains) with DRPLA. Interacts (via its second PDZ domain) with PTEN (via unphosphorylated C-terminus); this interaction diminishes the degradation rate of PTEN. Interacts (via guanylate kinase domain) with DLGAP1. Interacts (via the PDZ domains) with GRIN2A, GRID2 and NLGN1. Interacts with CTNND2, CTNNB1 and MAGUIN-1. Interacts with ACVR2A, SMAD2 and SMAD3. Part of a complex consisting of MAGI2/ARIP1, ACVR2A, ACVR1B and SMAD3. May interact with HTR2A. Interacts with RAPGEF2. Identified in a complex with ACTN4, CASK, IQGAP1, NPHS1, SPTAN1 and SPTBN1. Interacts with DDN. Found in a complex, at least composed of KIDINS220, MAGI2, NTRK1 and RAPGEF2; the complex is mainly formed at late endosomes in a NGF-dependent manner. Interacts with RAPGEF2; the interaction occurs before or after nerve growth factor (NGF) stimulation. Interacts (via PDZ domain) with KIDINS220 (via C-terminal domain). Interacts with IGSF9 and HTR4. Interacts with DLL1. Found in a complex with IGSF9B and NLGN2; the interaction with IGSF9B is mediated via the PDZ 5 and PDZ 6 domains, while the interaction with NLGN2 is mediated via the WW1, WW2 and PDZ2 domains. Interacts (via PDZ 6 domain) with USH1G (via SAM domain); the interaction is triggered by phosphorylation of USH1G by CK2 and negatively regulates MAGI2-mediated endocytosis. In terms of tissue distribution, expressed throughout the retina except in the nuclear layers and the photoreceptor outer segments (at protein level). Highest retinal expression is observed in the outer plexiform layer, the outer limiting membrane and the inner segment of photoreceptor cells (at protein level). Expressed in brain.

It localises to the cytoplasm. Its subcellular location is the late endosome. The protein localises to the synapse. It is found in the synaptosome. The protein resides in the cell membrane. It localises to the cytoskeleton. Its subcellular location is the microtubule organizing center. The protein localises to the centrosome. It is found in the cell projection. The protein resides in the cilium. It localises to the centriole. Its subcellular location is the photoreceptor inner segment. The protein localises to the photoreceptor outer segment. Seems to act as a scaffold molecule at synaptic junctions by assembling neurotransmitter receptors and cell adhesion proteins. Plays a role in nerve growth factor (NGF)-induced recruitment of RAPGEF2 to late endosomes and neurite outgrowth. May play a role in regulating activin-mediated signaling in neuronal cells. Enhances the ability of PTEN to suppress AKT1 activation. Plays a role in receptor-mediated clathrin-dependent endocytosis which is required for ciliogenesis. This chain is Membrane-associated guanylate kinase, WW and PDZ domain-containing protein 2 (Magi2), found in Mus musculus (Mouse).